Here is a 231-residue protein sequence, read N- to C-terminus: Large ribosomal subunit protein uL1 (231 aa).

This sequence belongs to the universal ribosomal protein uL1 family. As to quaternary structure, part of the 50S ribosomal subunit.

In terms of biological role, binds directly to 23S rRNA. The L1 stalk is quite mobile in the ribosome, and is involved in E site tRNA release. Its function is as follows. Protein L1 is also a translational repressor protein, it controls the translation of the L11 operon by binding to its mRNA. The polypeptide is Large ribosomal subunit protein uL1 (Chromobacterium violaceum (strain ATCC 12472 / DSM 30191 / JCM 1249 / CCUG 213 / NBRC 12614 / NCIMB 9131 / NCTC 9757 / MK)).